The chain runs to 68 residues: Alpha-conotoxin-like Mr1.2 (68 aa).

A signal peptide spans 1 to 21 (MGMRMMFTVFLLVVLATTVVS). Positions 22–48 (FTSDRGSDGRNAAAKDKASDLVALTVK) are excised as a propeptide. 2 cysteine pairs are disulfide-bonded: Cys-50-Cys-56 and Cys-51-Cys-64. A ser-Xaa-Pro motif, crucial for potent interaction with nAChR region spans residues 52–54 (SNP). Asn-65 bears the Asparagine amide mark.

This sequence belongs to the conotoxin A superfamily. Expressed by the venom duct.

The protein resides in the secreted. In terms of biological role, alpha-conotoxins act on postsynaptic membranes, they bind to the nicotinic acetylcholine receptors (nAChR) and thus inhibit them. The protein is Alpha-conotoxin-like Mr1.2 of Conus marmoreus (Marble cone).